The following is a 212-amino-acid chain: Bcl-2-related ovarian killer protein (212 aa).

S7 carries the post-translational modification Phosphoserine. Residues 15–45 (MDAFDRSPTDKELVAQAKALGREYVHARLLR) are interactions with ITPR1. Residues K25 and K32 each participate in a glycyl lysine isopeptide (Lys-Gly) (interchain with G-Cter in ubiquitin) cross-link. Positions 32 to 44 (KALGREYVHARLL) match the BH4 motif. The short motif at 66–82 (VCAVLLRLGDELEMIRP) is the BH3 element. The tract at residues 70-78 (LLRLGDELE) is nuclear export signal. Residues 112–131 (HIFSAGITWGKVVSLYAVAA) carry the BH1 motif. Glycyl lysine isopeptide (Lys-Gly) (interchain with G-Cter in ubiquitin) cross-links involve residues K159 and K176. Positions 164 to 178 (WLRRRGGWTDVLKCV) match the BH2 motif. The chain crosses the membrane as a helical span at residues 189-209 (WLVAALCSFGRFLKAAFFVLL).

It belongs to the Bcl-2 family. In terms of assembly, monomer; positively regulates apoptotic process. Homodimer. Heterodimer. Oligomer; promoted by apoptotic stimuli and BH3-only proteins; mediates constitutive activation. Interacts (via BH4 domain) with ITPR1; enhances BOK expression and stabilization; limits apoptosis and prevents ubiquitination and then degradation; protects ITPR1 from proteolysis by CASP3 during apoptosis. Interacts with ITPR2 and ITPR3; binds most strongly to ITPR2, and barely to ITPR3; regulates their expression. Interacts with XPO1; translocates to the cytoplasm. Interacts with BNIP3; promotes oligomerization. Ubiquitinated by AMFR/gp78 E3 ubiquitin ligase complex; mediates degradation by ubiquitin-proteasome pathway in a VCP/p97-dependent manner; prevents from pro-apoptotic activity; promotes degradation of newly synthesized proteins that are not ITPR1 associated. As to expression, expressed mainly in oocytes; weak expression in granulosa cells of the developing follicles. In adult human ovaries, expressed in granulosa cells at all follicular stages, but expression in primordial/primary follicles granulosa cell is stronger than in secondary and antral follicles.

The protein resides in the mitochondrion membrane. Its subcellular location is the endoplasmic reticulum membrane. It is found in the mitochondrion inner membrane. The protein localises to the cytoplasm. It localises to the nucleus. The protein resides in the mitochondrion. Its subcellular location is the endoplasmic reticulum. It is found in the mitochondrion outer membrane. The protein localises to the early endosome membrane. It localises to the recycling endosome membrane. The protein resides in the nucleus outer membrane. Its subcellular location is the golgi apparatus. It is found in the cis-Golgi network membrane. The protein localises to the trans-Golgi network membrane. It localises to the membrane. Its function is as follows. Apoptosis regulator that functions through different apoptotic signaling pathways. Plays a roles as pro-apoptotic protein that positively regulates intrinsic apoptotic process in a BAX- and BAK1-dependent manner or in a BAX- and BAK1-independent manner. In response to endoplasmic reticulum stress promotes mitochondrial apoptosis through downstream BAX/BAK1 activation and positive regulation of PERK-mediated unfolded protein response. Activates apoptosis independently of heterodimerization with survival-promoting BCL2 and BCL2L1 through induction of mitochondrial outer membrane permeabilization, in a BAX- and BAK1-independent manner, in response to inhibition of ERAD-proteasome degradation system, resulting in cytochrome c release. In response to DNA damage, mediates intrinsic apoptotic process in a TP53-dependent manner. Plays a role in granulosa cell apoptosis by CASP3 activation. Plays a roles as anti-apoptotic protein during neuronal apoptotic process, by negatively regulating poly ADP-ribose polymerase-dependent cell death through regulation of neuronal calcium homeostasis and mitochondrial bioenergetics in response to NMDA excitation. In addition to its role in apoptosis, may regulate trophoblast cell proliferation during the early stages of placental development, by acting on G1/S transition through regulation of CCNE1 expression. May also play a role as an inducer of autophagy by disrupting interaction between MCL1 and BECN1. Pro-apoptotic molecule exerting its function through the mitochondrial pathway. The sequence is that of Bcl-2-related ovarian killer protein from Homo sapiens (Human).